A 149-amino-acid chain; its full sequence is SKP1-like protein 14 (149 aa).

The interval 91–149 (LLAANYLNIKGLLDLSAQTVADRIKDKTPEEIREIFNIENDFTPEEEAAVRKENAWAFE) is interaction with the F-box domain of F-box proteins.

This sequence belongs to the SKP1 family. As to quaternary structure, part of a SCF (SKP1-cullin-F-box) protein ligase complex. Interacts with CPR1/CPR30, At3g61590, At4g39550 and At5g49610. Restricted to inflorescences, pollen and leaves.

It is found in the nucleus. It functions in the pathway protein modification; protein ubiquitination. Functionally, involved in ubiquitination and subsequent proteasomal degradation of target proteins. Together with CUL1, RBX1 and a F-box protein, it forms a SCF E3 ubiquitin ligase complex. The functional specificity of this complex depends on the type of F-box protein. In the SCF complex, it serves as an adapter that links the F-box protein to CUL1. This is SKP1-like protein 14 (ASK14) from Arabidopsis thaliana (Mouse-ear cress).